The chain runs to 455 residues: Phosphomethylpyrimidine synthase (455 aa).

Residues asparagine 80, methionine 109, tyrosine 139, histidine 175, 195 to 197 (SRG), 236 to 239 (DSLR), and glutamate 275 each bind substrate. Histidine 279 serves as a coordination point for Zn(2+). Tyrosine 302 contacts substrate. Zn(2+) is bound at residue histidine 343. Residues cysteine 423, cysteine 426, and cysteine 431 each coordinate [4Fe-4S] cluster.

The protein belongs to the ThiC family. The cofactor is [4Fe-4S] cluster.

The catalysed reaction is 5-amino-1-(5-phospho-beta-D-ribosyl)imidazole + S-adenosyl-L-methionine = 4-amino-2-methyl-5-(phosphooxymethyl)pyrimidine + CO + 5'-deoxyadenosine + formate + L-methionine + 3 H(+). Its pathway is cofactor biosynthesis; thiamine diphosphate biosynthesis. Catalyzes the synthesis of the hydroxymethylpyrimidine phosphate (HMP-P) moiety of thiamine from aminoimidazole ribotide (AIR) in a radical S-adenosyl-L-methionine (SAM)-dependent reaction. This chain is Phosphomethylpyrimidine synthase, found in Synechococcus sp. (strain JA-2-3B'a(2-13)) (Cyanobacteria bacterium Yellowstone B-Prime).